A 323-amino-acid chain; its full sequence is Fructose-1,6-bisphosphatase class 1 (323 aa).

Residues Glu-88, Asp-107, Leu-109, and Asp-110 each contribute to the Mg(2+) site. Substrate-binding positions include 110-113 and Asn-200; that span reads DGSS. Position 272 (Glu-272) interacts with Mg(2+).

Belongs to the FBPase class 1 family. As to quaternary structure, homotetramer. The cofactor is Mg(2+).

It is found in the cytoplasm. It carries out the reaction beta-D-fructose 1,6-bisphosphate + H2O = beta-D-fructose 6-phosphate + phosphate. Its pathway is carbohydrate biosynthesis; gluconeogenesis. This is Fructose-1,6-bisphosphatase class 1 from Acinetobacter baumannii (strain ACICU).